A 105-amino-acid chain; its full sequence is Large ribosomal subunit protein uL24 (105 aa).

It belongs to the universal ribosomal protein uL24 family. As to quaternary structure, part of the 50S ribosomal subunit.

In terms of biological role, one of two assembly initiator proteins, it binds directly to the 5'-end of the 23S rRNA, where it nucleates assembly of the 50S subunit. One of the proteins that surrounds the polypeptide exit tunnel on the outside of the subunit. The chain is Large ribosomal subunit protein uL24 from Nitrosococcus oceani (strain ATCC 19707 / BCRC 17464 / JCM 30415 / NCIMB 11848 / C-107).